Consider the following 368-residue polypeptide: Probable ubiquitin receptor RAD23a (368 aa).

The region spanning 1 to 77 is the Ubiquitin-like domain; that stretch reads MKLTVKTLKG…GFLVVMLSKS (77 aa). Residues 80–111 are compositionally biased toward low complexity; the sequence is ASSAGPSSTQPTSTTTSTISSTTLAAPSTTQS. Residues 80–136 are disordered; sequence ASSAGPSSTQPTSTTTSTISSTTLAAPSTTQSIAVPASNSTPVQEQPTAQSDTYGQA. The span at 116–136 shows a compositional bias: polar residues; sequence ASNSTPVQEQPTAQSDTYGQA. In terms of domain architecture, UBA 1 spans 142 to 185; the sequence is SGSSIEQMVQQIMEMGGGSWDKETVTRALRAAYNNPERAVDYLY. A disordered region spans residues 202-222; the sequence is VGSGRELTAPPPSGGPNSSPL. The 44-residue stretch at 239 to 282 folds into the STI1 domain; that stretch reads GTLEFLRGNDQFQQLRSMVNSNPQILQPMLQELGKQNPQLLRLI. The region spanning 320–360 is the UBA 2 domain; that stretch reads VTPEEQESIERLEAMGFDRAIVIEAFLSCDRNEELAANYLL.

The protein belongs to the RAD23 family. As to quaternary structure, interacts with 'Lys-48'-linked polyubiquitin chains. Interacts with RPN10. As to expression, widely expressed in the whole plant.

The protein resides in the nucleus. Its subcellular location is the cytoplasm. In terms of biological role, may be involved in nucleotide excision repair. Binds and presumably selects ubiquitin-conjugates for destruction. Prefers multiubiquitin chains rather than single ubiquitins, with a binding affinity for 'Lys-48'-linked ubiquitin chains. Acts as a ubiquitin receptor that associates with the 26S proteasomal docking subunit RPN10 for the indirect recognition of ubiquitinated substrates of ubiquitin/26S proteasome-mediated proteolysis (UPP). Involved in UV tolerance in roots, specifically in dark conditions. This is Probable ubiquitin receptor RAD23a from Arabidopsis thaliana (Mouse-ear cress).